The following is a 198-amino-acid chain: Thymidine kinase (198 aa).

ATP contacts are provided by residues 9 to 16 (GTMNSGKS) and 85 to 88 (DEAQ). Glu86 functions as the Proton acceptor in the catalytic mechanism. The Zn(2+) site is built by Cys143, Cys146, Cys180, and His183.

Belongs to the thymidine kinase family. In terms of assembly, homotetramer.

The protein resides in the cytoplasm. The catalysed reaction is thymidine + ATP = dTMP + ADP + H(+). The chain is Thymidine kinase from Streptococcus thermophilus (strain ATCC BAA-250 / LMG 18311).